A 104-amino-acid polypeptide reads, in one-letter code: L-rhamnose mutarotase (104 aa).

Tyrosine 18 is a binding site for substrate. Histidine 22 acts as the Proton donor in catalysis. Substrate contacts are provided by residues tyrosine 41 and 76 to 77 (WW).

Belongs to the rhamnose mutarotase family. As to quaternary structure, homodimer.

It localises to the cytoplasm. It catalyses the reaction alpha-L-rhamnose = beta-L-rhamnose. It participates in carbohydrate metabolism; L-rhamnose metabolism. In terms of biological role, involved in the anomeric conversion of L-rhamnose. The protein is L-rhamnose mutarotase of Bacteroides thetaiotaomicron (strain ATCC 29148 / DSM 2079 / JCM 5827 / CCUG 10774 / NCTC 10582 / VPI-5482 / E50).